The following is a 214-amino-acid chain: Endothelin-3 (214 aa).

The N-terminal stretch at 1–16 is a signal peptide; that stretch reads MEPGLWLLLGLTVTSA. Positions 17-94 are excised as a propeptide; that stretch reads AGLVPCPQSG…DKGLPAHHRP (78 aa). The disordered stretch occupies residues 24–91; that stretch reads QSGDSGRASV…KQEDKGLPAH (68 aa). Polar residues predominate over residues 25–35; sequence SGDSGRASVSQ. 2 disulfides stabilise this stretch: cysteine 97–cysteine 111 and cysteine 99–cysteine 107. A propeptide spanning residues 118 to 214 is cleaved from the precursor; sequence INTPEQTVPY…MSRTDKAHRP (97 aa). Residues 159 to 173 form an endothelin-like region; the sequence is CTCMGADDKACAHFC. Residues 183 to 214 form a disordered region; sequence SGRAERPAAEEMRETGGPRQRLMSRTDKAHRP. The span at 185–198 shows a compositional bias: basic and acidic residues; the sequence is RAERPAAEEMRETG.

The protein belongs to the endothelin/sarafotoxin family.

It is found in the secreted. Its function is as follows. Endothelins are endothelium-derived vasoconstrictor peptides. The sequence is that of Endothelin-3 (Edn3) from Mus musculus (Mouse).